Consider the following 280-residue polypeptide: Eukaryotic translation initiation factor 3 subunit F-1 (280 aa).

Residues 8-138 (VRVHPVVLFQ…LRSYVCIQLG (131 aa)) form the MPN domain.

The protein belongs to the eIF-3 subunit F family. As to quaternary structure, component of the eukaryotic translation initiation factor 3 (eIF-3) complex. The eIF-3 complex interacts with pix.

The protein localises to the cytoplasm. Functionally, component of the eukaryotic translation initiation factor 3 (eIF-3) complex, which is involved in protein synthesis of a specialized repertoire of mRNAs and, together with other initiation factors, stimulates binding of mRNA and methionyl-tRNAi to the 40S ribosome. The eIF-3 complex specifically targets and initiates translation of a subset of mRNAs involved in cell proliferation. This Drosophila persimilis (Fruit fly) protein is Eukaryotic translation initiation factor 3 subunit F-1.